The primary structure comprises 81 residues: Centromere protein X (81 aa).

M1 carries the post-translational modification N-acetylmethionine.

The protein belongs to the CENP-X/MHF2 family. In terms of assembly, heterodimer with CENPX, sometimes called MHF; this interaction stabilizes both partners. MHF heterodimers can assemble to form tetrameric structures. MHF also coassemble with CENPT-CENPW heterodimers at centromeres to form the tetrameric CENP-T-W-S-X complex. Forms a discrete complex with FANCM and CENPX, called FANCM-MHF; this interaction, probably mediated by direct binding between CENPS and FANCM, leads to synergistic activation of double-stranded DNA binding and strongly stimulates FANCM-mediated DNA remodeling. Recruited by FANCM to the Fanconi anemia (FA) core complex, which consists of CENPS, CENPX, FANCA, FANCB, FANCC, FANCE, FANCF, FANCG, FANCL, FANCM, FAAP24 and FAAP100. The FA core complex associates with Bloom syndrome (BLM) complex, which consists of at least BLM, DNA topoisomerase 3-alpha (TOP3A), RMI1/BLAP75, RPA1/RPA70 and RPA2/RPA32. The super complex between FA and BLM is called BRAFT.

The protein localises to the nucleus. It localises to the chromosome. It is found in the centromere. The protein resides in the kinetochore. Functionally, DNA-binding component of the Fanconi anemia (FA) core complex. Required for the normal activation of the FA pathway, leading to monoubiquitination of the FANCI-FANCD2 complex in response to DNA damage, cellular resistance to DNA cross-linking drugs, and prevention of chromosomal breakage. In complex with CENPS (MHF heterodimer), crucial cofactor for FANCM in both binding and ATP-dependent remodeling of DNA. Stabilizes FANCM. In complex with CENPS and FANCM (but not other FANC proteins), rapidly recruited to blocked forks and promotes gene conversion at blocked replication forks. In complex with CENPS, CENPT and CENPW (CENP-T-W-S-X heterotetramer), involved in the formation of a functional kinetochore outer plate, which is essential for kinetochore-microtubule attachment and faithful mitotic progression. As a component of MHF and CENP-T-W-S-X complexes, binds DNA and bends it to form a nucleosome-like structure. DNA-binding function is fulfilled in the presence of CENPS, with the following preference for DNA substates: Holliday junction &gt; double-stranded &gt; splay arm &gt; single-stranded. Does not bind DNA on its own. This is Centromere protein X (CENPX) from Homo sapiens (Human).